The chain runs to 453 residues: Ribulose bisphosphate carboxylase large chain (453 aa).

A propeptide spanning residues 1–2 (MS) is cleaved from the precursor. Proline 3 bears the N-acetylproline mark. Position 14 is an N6,N6,N6-trimethyllysine (lysine 14). Substrate contacts are provided by asparagine 123 and threonine 173. Lysine 175 functions as the Proton acceptor in the catalytic mechanism. Lysine 177 is a substrate binding site. 3 residues coordinate Mg(2+): lysine 201, aspartate 203, and glutamate 204. The residue at position 201 (lysine 201) is an N6-carboxylysine. Catalysis depends on histidine 294, which acts as the Proton acceptor. 3 residues coordinate substrate: arginine 295, histidine 327, and serine 379.

The protein belongs to the RuBisCO large chain family. Type I subfamily. In terms of assembly, heterohexadecamer of 8 large chains and 8 small chains; disulfide-linked. The disulfide link is formed within the large subunit homodimers. It depends on Mg(2+) as a cofactor. The disulfide bond which can form in the large chain dimeric partners within the hexadecamer appears to be associated with oxidative stress and protein turnover.

Its subcellular location is the plastid. The protein resides in the chloroplast. It carries out the reaction 2 (2R)-3-phosphoglycerate + 2 H(+) = D-ribulose 1,5-bisphosphate + CO2 + H2O. The enzyme catalyses D-ribulose 1,5-bisphosphate + O2 = 2-phosphoglycolate + (2R)-3-phosphoglycerate + 2 H(+). RuBisCO catalyzes two reactions: the carboxylation of D-ribulose 1,5-bisphosphate, the primary event in carbon dioxide fixation, as well as the oxidative fragmentation of the pentose substrate in the photorespiration process. Both reactions occur simultaneously and in competition at the same active site. This is Ribulose bisphosphate carboxylase large chain from Galium lucidum.